Consider the following 598-residue polypeptide: Elongation factor 4 (598 aa).

The tr-type G domain occupies 2-184 (DHIRNFSIIA…AIVKRVPPPR (183 aa)). GTP contacts are provided by residues 14-19 (DHGKST) and 131-134 (NKID).

This sequence belongs to the TRAFAC class translation factor GTPase superfamily. Classic translation factor GTPase family. LepA subfamily.

It is found in the cell inner membrane. The catalysed reaction is GTP + H2O = GDP + phosphate + H(+). Its function is as follows. Required for accurate and efficient protein synthesis under certain stress conditions. May act as a fidelity factor of the translation reaction, by catalyzing a one-codon backward translocation of tRNAs on improperly translocated ribosomes. Back-translocation proceeds from a post-translocation (POST) complex to a pre-translocation (PRE) complex, thus giving elongation factor G a second chance to translocate the tRNAs correctly. Binds to ribosomes in a GTP-dependent manner. The chain is Elongation factor 4 from Syntrophus aciditrophicus (strain SB).